A 208-amino-acid polypeptide reads, in one-letter code: MKIKTSDIVMSAVAPKQYPEEGLPEIALAGRSNVGKSSLINTILNRKKLARVSSSPGKTRTLNFYLINKEFHLVDLPGYGYARVSKGEKSSWGKMLETYLSNRPNLYEVVLLIDIRHEPSEQDQQMYQWIRHYGYGTIVVATKSDKIARSQHQKHFKMIRDTLGMSPEDRLIPISSLKKLGIEQLWGALEDIFVENELPITIEKEAPK.

Residues 22-195 (GLPEIALAGR…WGALEDIFVE (174 aa)) enclose the EngB-type G domain. GTP contacts are provided by residues 30 to 37 (GRSNVGKS), 57 to 61 (GKTRT), 75 to 78 (DLPG), 142 to 145 (TKSD), and 174 to 176 (ISS). Mg(2+) contacts are provided by Ser37 and Thr59.

This sequence belongs to the TRAFAC class TrmE-Era-EngA-EngB-Septin-like GTPase superfamily. EngB GTPase family. Mg(2+) is required as a cofactor.

Its function is as follows. Necessary for normal cell division and for the maintenance of normal septation. This is Probable GTP-binding protein EngB from Alkaliphilus metalliredigens (strain QYMF).